The following is a 350-amino-acid chain: Histidinol-phosphate aminotransferase (350 aa).

Lys-209 is subject to N6-(pyridoxal phosphate)lysine.

It belongs to the class-II pyridoxal-phosphate-dependent aminotransferase family. Histidinol-phosphate aminotransferase subfamily. As to quaternary structure, homodimer. Requires pyridoxal 5'-phosphate as cofactor.

It carries out the reaction L-histidinol phosphate + 2-oxoglutarate = 3-(imidazol-4-yl)-2-oxopropyl phosphate + L-glutamate. Its pathway is amino-acid biosynthesis; L-histidine biosynthesis; L-histidine from 5-phospho-alpha-D-ribose 1-diphosphate: step 7/9. This chain is Histidinol-phosphate aminotransferase, found in Geobacter sp. (strain M21).